The chain runs to 118 residues: Large ribosomal subunit protein bL20 (118 aa).

Belongs to the bacterial ribosomal protein bL20 family.

Functionally, binds directly to 23S ribosomal RNA and is necessary for the in vitro assembly process of the 50S ribosomal subunit. It is not involved in the protein synthesizing functions of that subunit. The polypeptide is Large ribosomal subunit protein bL20 (Phenylobacterium zucineum (strain HLK1)).